Consider the following 635-residue polypeptide: MPSWALFMVTSCLLLAPQNLAQVSSQDVSLLASDSEPLKCFSRTFEDLTCFWDEEEAAPSGTYQLLYAYPREKPRACPLSSQSMPHFGTRYVCQFPDQEEVRLFFPLHLWVKNVFLNQTRTQRVLFVDSVGLPAPPSIIKAMGGSQPGELQISWEEPAPEISDFLRYELRYGPRDPKNSTGPTVIQLIATETCCPALQRPHSASALDQSPCAQPTMPWQDGPKQTSPSREASALTAEGGSCLISGLQPGNSYWLQLRSEPDGISLGGSWGSWSLPVTVDLPGDAVALGLQCFTLDLKNVTCQWQQQDHASSQGFFYHSRARCCPRDRYPIWENCEEEEKTNPGLQTPQFSRCHFKSRNDSIIHILVEVTTAPGTVHSYLGSPFWIHQAVRLPTPNLHWREISSGHLELEWQHPSSWAAQETCYQLRYTGEGHQDWKVLEPPLGARGGTLELRPRSRYRLQLRARLNGPTYQGPWSSWSDPTRVETATETAWISLVTALHLVLGLSAVLGLLLLRWQFPAHYRRLRHALWPSLPDLHRVLGQYLRDTAALSPPKATVSDTCEEVEPSLLEILPKSSERTPLPLCSSQAQMDYRRLQPSCLGTMPLSVCPPMAESGSCCTTHIANHSYLPLSYWQQP.

The first 25 residues, 1–25 (MPSWALFMVTSCLLLAPQNLAQVSS), serve as a signal peptide directing secretion. Topologically, residues 26–491 (QDVSLLASDS…RVETATETAW (466 aa)) are extracellular. Disulfide bonds link Cys-40–Cys-50 and Cys-77–Cys-93. 2 N-linked (GlcNAc...) asparagine glycosylation sites follow: Asn-117 and Asn-178. In terms of domain architecture, Fibronectin type-III 1 spans 172-281 (GPRDPKNSTG…WSLPVTVDLP (110 aa)). Cystine bridges form between Cys-193–Cys-323, Cys-194–Cys-241, Cys-291–Cys-301, and Cys-334–Cys-352. Residues 205-232 (ALDQSPCAQPTMPWQDGPKQTSPSREAS) form a disordered region. An N-linked (GlcNAc...) asparagine glycan is attached at Asn-298. Asn-358 carries N-linked (GlcNAc...) asparagine glycosylation. A Fibronectin type-III 2 domain is found at 392 to 486 (PTPNLHWREI…WSDPTRVETA (95 aa)). Positions 474 to 478 (WSSWS) match the WSXWS motif motif. Residues 492–513 (ISLVTALHLVLGLSAVLGLLLL) form a helical membrane-spanning segment. The Cytoplasmic portion of the chain corresponds to 514 to 635 (RWQFPAHYRR…YLPLSYWQQP (122 aa)). Positions 528–536 (LWPSLPDLH) match the Box 1 motif motif. Residues Lys-553 and Lys-573 each participate in a glycyl lysine isopeptide (Lys-Gly) (interchain with G-Cter in ubiquitin) cross-link. 3 positions are modified to phosphotyrosine: Tyr-591, Tyr-626, and Tyr-631.

The protein belongs to the type I cytokine receptor family. Type 1 subfamily. Homodimer. Interacts with ATXN2L. Interacts with JAK2 and TYK2; these interactions increase MPL localization to the cell membrane. Interacts with THPO. Interacts with SHIP/INPP5D. Interacts with BTK. Interacts with SYK; this interaction negatively regulates THPO-mediated ERK1/2 signaling. Post-translationally, phosphorylated at Tyr-591 in response to THPO stimulation. Ubiquitination at Lys-553 and Lys-573 targets MPL for degradation by both the lysosomal and proteasomal pathways. The E3 ubiquitin-protein ligase CBL significantly contributes to this ubiquitination. In terms of tissue distribution, expressed at a low level in a large number of cells of hematopoietic origin. Isoform 1 and isoform 2 are always found to be coexpressed.

Its subcellular location is the cell membrane. The protein localises to the golgi apparatus. The protein resides in the cell surface. Functionally, receptor for thrombopoietin that regulates hematopoietic stem cell renewal, megakaryocyte differentiation, and platelet formation. Upon activation by THPO, induces rapid tyrosine phosphorylation and activation of JAK2, providing docking sites for many signaling proteins such as STAT5, SHIP/INPP5D, GRB2, SOS1 and PI3K. In turn, These signaling cascades lead to the proliferation, survival, and differentiation of megakaryocytes, ultimately leading to increased platelet production. The sequence is that of Thrombopoietin receptor (MPL) from Homo sapiens (Human).